Here is a 489-residue protein sequence, read N- to C-terminus: Neuropeptide CCHamide-2 receptor (489 aa).

Over 1–74 (MYASLMDVGQ…DRPETYIVTV (74 aa)) the chain is Extracellular. 2 N-linked (GlcNAc...) asparagine glycosylation sites follow: Asn25 and Asn50. A helical membrane pass occupies residues 75–95 (LYTLIFIVGVLGNGTLVIIFF). Topologically, residues 96–107 (RHRSMRNIPNTY) are cytoplasmic. Residues 108 to 128 (ILSLALADLLVILVCVPVATI) form a helical membrane-spanning segment. Residues 129-143 (VYTQESWPFERNMCR) are Extracellular-facing. Residues Cys142 and Cys225 are joined by a disulfide bond. The chain crosses the membrane as a helical span at residues 144–164 (ISEFFKDISIGVSVFTLTALS). Residues 165–184 (GERYCAIVNPLRKLQTKPLT) lie on the Cytoplasmic side of the membrane. Residues 185–205 (VFTAVMIWILAILLGMPSVLF) form a helical membrane-spanning segment. The Extracellular portion of the chain corresponds to 206 to 235 (SDIKSYPVFTATGNMTIEVCSPFRDPEYAK). The N-linked (GlcNAc...) asparagine glycan is linked to Asn219. Residues 236 to 256 (FMVAGKALVYYLLPLSIIGAL) traverse the membrane as a helical segment. Over 257–293 (YIMMAKRLHMSARNMPGEQQSMQSRTQARARLHVARM) the chain is Cytoplasmic. A helical membrane pass occupies residues 294-314 (VVAFVVVFFICFFPYHVFELW). At 315–333 (YHFYPTAEEDFDEFWNVLR) the chain is on the extracellular side. A helical membrane pass occupies residues 334–354 (IVGFCTSFLNSCVNPVALYCV). The Cytoplasmic portion of the chain corresponds to 355–489 (SGVFRQHFNR…NRYESGVMRY (135 aa)). The interval 438 to 468 (SFHRQDSMPLQHGNAHGGGAGGGSSGLGAGG) is disordered. The span at 452–468 (AHGGGAGGGSSGLGAGG) shows a compositional bias: gly residues.

Belongs to the G-protein coupled receptor 1 family. Highly expressed in larval brain. Also highly expressed in adult brain with very low levels in larval and adult gut.

Its subcellular location is the cell membrane. Its function is as follows. Receptor for the neuropeptide CCHamide-2. This Drosophila melanogaster (Fruit fly) protein is Neuropeptide CCHamide-2 receptor.